The sequence spans 218 residues: ATP phosphoribosyltransferase (218 aa).

This sequence belongs to the ATP phosphoribosyltransferase family. Short subfamily. Heteromultimer composed of HisG and HisZ subunits.

Its subcellular location is the cytoplasm. It carries out the reaction 1-(5-phospho-beta-D-ribosyl)-ATP + diphosphate = 5-phospho-alpha-D-ribose 1-diphosphate + ATP. The protein operates within amino-acid biosynthesis; L-histidine biosynthesis; L-histidine from 5-phospho-alpha-D-ribose 1-diphosphate: step 1/9. Its function is as follows. Catalyzes the condensation of ATP and 5-phosphoribose 1-diphosphate to form N'-(5'-phosphoribosyl)-ATP (PR-ATP). Has a crucial role in the pathway because the rate of histidine biosynthesis seems to be controlled primarily by regulation of HisG enzymatic activity. In Burkholderia mallei (strain ATCC 23344), this protein is ATP phosphoribosyltransferase.